The following is a 309-amino-acid chain: Malate dehydrogenase (309 aa).

NAD(+)-binding positions include 9–14 (GAGAVG) and D33. 2 residues coordinate substrate: R82 and R88. Residues N95 and 118–120 (VTN) each bind NAD(+). Substrate-binding residues include N120 and R151. Residue H175 is the Proton acceptor of the active site.

It belongs to the LDH/MDH superfamily. MDH type 3 family.

It catalyses the reaction (S)-malate + NAD(+) = oxaloacetate + NADH + H(+). Functionally, catalyzes the reversible oxidation of malate to oxaloacetate. The sequence is that of Malate dehydrogenase from Thermomicrobium roseum (strain ATCC 27502 / DSM 5159 / P-2).